The following is a 213-amino-acid chain: Membrane-spanning 4-domains subfamily A member 3 (213 aa).

The Cytoplasmic segment spans residues 1-26; the sequence is MKPEETGGSVYQPLDESRHVQRGVLQ. Residues 27–47 traverse the membrane as a helical segment; it reads ALGAIQILNGILILALGIFLV. The Extracellular segment spans residues 48-58; the sequence is CLQHVSHHFRH. Residues 59–79 traverse the membrane as a helical segment; that stretch reads FFFFTFYTGYPLWGAVFFISS. Residues 80–97 lie on the Cytoplasmic side of the membrane; the sequence is GSLTVAAGRNPTRMLMQN. A helical transmembrane segment spans residues 98 to 118; that stretch reads SFGINIASTTIAFVGTVFLSV. Topologically, residues 119 to 148 are extracellular; sequence HLAFNTQAFKGCQSSPSPDVCISLGSSSDG. The chain crosses the membrane as a helical span at residues 149 to 169; that stretch reads LVSLMLILTLLELSVTISISA. The Cytoplasmic portion of the chain corresponds to 170–213; sequence MWCLGNVCGLREAITSPPNSVESGILPEGSDSENLNTQPQASEE. A disordered region spans residues 189 to 213; sequence SVESGILPEGSDSENLNTQPQASEE. Positions 201 to 213 are enriched in polar residues; it reads SENLNTQPQASEE.

It belongs to the MS4A family. Interacts with CDKN3. Interacts with CDKN3-CDK2 complexes through its binding to CDKN3; this interaction facilitates dissociation of cyclin A from CDKN3-CDK2 complexes. In terms of tissue distribution, expressed at low levels only in specific immune tissues, such as, spleen, bone marrow and peripheral blood leukocytes.

The protein localises to the membrane. In terms of biological role, hematopoietic modulator for the G1-S cell cycle transition. Modulates the level of phosphorylation of cyclin-dependent kinase 2 (CDK2) through its direct binding to cyclin-dependent kinase inhibitor 3 (CDKN3/KAP). This Mus musculus (Mouse) protein is Membrane-spanning 4-domains subfamily A member 3 (Ms4a3).